Reading from the N-terminus, the 154-residue chain is Ribosome maturation factor RimP (154 aa).

This sequence belongs to the RimP family.

It localises to the cytoplasm. Required for maturation of 30S ribosomal subunits. The chain is Ribosome maturation factor RimP from Prochlorococcus marinus (strain MIT 9303).